The chain runs to 121 residues: Basic phospholipase A2 BmjeTX-I (121 aa).

Intrachain disulfides connect cysteine 26–cysteine 114, cysteine 28–cysteine 45, cysteine 44–cysteine 95, cysteine 50–cysteine 121, cysteine 51–cysteine 88, cysteine 58–cysteine 82, and cysteine 76–cysteine 86. Tyrosine 27, glycine 29, and glycine 31 together coordinate Ca(2+). Histidine 48 is a catalytic residue. Residue aspartate 49 coordinates Ca(2+). The active site involves aspartate 89.

Ca(2+) serves as cofactor. As to expression, expressed by the venom gland.

It localises to the secreted. The enzyme catalyses a 1,2-diacyl-sn-glycero-3-phosphocholine + H2O = a 1-acyl-sn-glycero-3-phosphocholine + a fatty acid + H(+). In terms of biological role, snake venom phospholipase A2 (PLA2) that induces a slight blockade of neuromuscular contraction in an indirectly stimulated chick biventer cervicis nerve-muscle preparation. Does not inhibit contraction of chick biventer cervicic nerve-muscle preparation in response to treatment with acetylcholine or KCl. The neuromuscular blockade is mediated by inhibitory action at the presynaptic motor nerve endings. Lyses skeletal myoblasts and myotubes in vitro, and intramuscular injection causes local muscle necrosis. Induces edema in the mouse foot pad. Induces a transient increase of IL-6 levels. PLA2 catalyzes the calcium-dependent hydrolysis of the 2-acyl groups in 3-sn-phosphoglycerides. The sequence is that of Basic phospholipase A2 BmjeTX-I from Bothrops marajoensis (Marajo lancehead).